Reading from the N-terminus, the 262-residue chain is Type III pantothenate kinase (262 aa).

Residue 6 to 13 (DVGNTNAV) participates in ATP binding. Residues tyrosine 100 and 107–110 (GADR) contribute to the substrate site. The active-site Proton acceptor is the aspartate 109. Position 129 (aspartate 129) interacts with K(+). Threonine 132 contacts ATP. A substrate-binding site is contributed by threonine 184.

This sequence belongs to the type III pantothenate kinase family. Homodimer. NH4(+) is required as a cofactor. Requires K(+) as cofactor.

The protein localises to the cytoplasm. It carries out the reaction (R)-pantothenate + ATP = (R)-4'-phosphopantothenate + ADP + H(+). Its pathway is cofactor biosynthesis; coenzyme A biosynthesis; CoA from (R)-pantothenate: step 1/5. Functionally, catalyzes the phosphorylation of pantothenate (Pan), the first step in CoA biosynthesis. This chain is Type III pantothenate kinase, found in Bacillus anthracis (strain A0248).